The following is a 144-amino-acid chain: Necrosis-inducing secreted protein 1 (144 aa).

The first 19 residues, 1 to 19 (MQFRASIAAAAGLFALANA), serve as a signal peptide directing secretion. 3 N-linked (GlcNAc...) asparagine glycosylation sites follow: asparagine 88, asparagine 126, and asparagine 133. The BAK1/SERK3-binding stretch occupies residues 103–132 (QYVVAAGLYSLYGASSSPTLSHYNVTVTVG).

It belongs to the NIS1 effector family.

It is found in the secreted. Its subcellular location is the host cytoplasm. In terms of biological role, secreted effector that induces necrotic lesions in Nicotiana benthamiana. Interacts with the host receptor-like kinases (RLKs) BAK1/SERK3 and BKK1/SERK4, inhibits their kinase activity and suppresses INF1-induced pathogen-associated molecular pattern (PAMP)-triggered immunity (PTI) in N.benthamiana. Also interacts with the host receptor-like cytoplasmic kinase (RLCK) BIK1 and inhibits its kinase activity, thereby inhibiting PAMP-induced ROS generation. In PTI, phosphorylation relaying by RLKs and RLCKs is critical for the initiation of downstream signaling. The protein is Necrosis-inducing secreted protein 1 of Colletotrichum higginsianum (strain IMI 349063) (Crucifer anthracnose fungus).